Here is a 101-residue protein sequence, read N- to C-terminus: Apolipoprotein C-II (101 aa).

The N-terminal stretch at 1 to 22 (MGTRFLLALCLVLLVLGFEVQG) is a signal peptide. The lipid binding stretch occupies residues 66–74 (AVDEKLRDL). The lipoprotein lipase cofactor stretch occupies residues 78–101 (STAAMSTYTGIFTDQVLSVLKGEE).

Belongs to the apolipoprotein C2 family. Post-translationally, proapolipoprotein C-II is synthesized as a sialic acid containing glycoprotein which is subsequently desialylated prior to its proteolytic processing. In terms of processing, proapolipoprotein C-II, the major form found in plasma undergoes proteolytic cleavage of its N-terminal hexapeptide to generate apolipoprotein C-II, which occurs as the minor form in plasma.

Its subcellular location is the secreted. In terms of biological role, component of chylomicrons, very low-density lipoproteins (VLDL), low-density lipoproteins (LDL), and high-density lipoproteins (HDL) in plasma. Plays an important role in lipoprotein metabolism as an activator of lipoprotein lipase. Both proapolipoprotein C-II and apolipoprotein C-II can activate lipoprotein lipase. In Macaca fascicularis (Crab-eating macaque), this protein is Apolipoprotein C-II (APOC2).